We begin with the raw amino-acid sequence, 545 residues long: Mitogen-activated protein kinase kinase kinase mom-4 (545 aa).

Over residues 1–21 (MDTSPHSKPSSSSASQSSHSP) the composition is skewed to low complexity. The tract at residues 1-35 (MDTSPHSKPSSSSASQSSHSPSPAPVTAPRKTRDS) is disordered. One can recognise a Protein kinase domain in the interval 53-308 (NLNSHQLGRG…AECLQYFTAL (256 aa)). ATP contacts are provided by residues 59–67 (LGRGTYGIV) and Lys86. The active-site Proton acceptor is Asp178. Residues 316–444 (NVPLADANTN…PIDDRRDSNE (129 aa)) form a disordered region. Polar residues-rich tracts occupy residues 352-369 (NGRT…QAVN) and 396-411 (ASSS…QSEA).

It belongs to the protein kinase superfamily. STE Ser/Thr protein kinase family. MAP kinase kinase kinase subfamily. In terms of assembly, interacts with, and is activated by, tap-1. Requires Mg(2+) as cofactor.

It catalyses the reaction L-seryl-[protein] + ATP = O-phospho-L-seryl-[protein] + ADP + H(+). The enzyme catalyses L-threonyl-[protein] + ATP = O-phospho-L-threonyl-[protein] + ADP + H(+). Its function is as follows. Part of the Wnt signaling pathway essential for the specification of the mesodermal cell fate in early embryos. Stimulates the wrm-1/lit-1-dependent phosphorylation of pop-1 and plays a role in the initial nuclear accumulation of wrm-1. This is Mitogen-activated protein kinase kinase kinase mom-4 from Caenorhabditis briggsae.